The following is a 272-amino-acid chain: Imidazole glycerol phosphate synthase subunit HisF (272 aa).

Catalysis depends on residues aspartate 11 and aspartate 130.

Belongs to the HisA/HisF family. Heterodimer of HisH and HisF.

It localises to the cytoplasm. It carries out the reaction 5-[(5-phospho-1-deoxy-D-ribulos-1-ylimino)methylamino]-1-(5-phospho-beta-D-ribosyl)imidazole-4-carboxamide + L-glutamine = D-erythro-1-(imidazol-4-yl)glycerol 3-phosphate + 5-amino-1-(5-phospho-beta-D-ribosyl)imidazole-4-carboxamide + L-glutamate + H(+). It participates in amino-acid biosynthesis; L-histidine biosynthesis; L-histidine from 5-phospho-alpha-D-ribose 1-diphosphate: step 5/9. In terms of biological role, IGPS catalyzes the conversion of PRFAR and glutamine to IGP, AICAR and glutamate. The HisF subunit catalyzes the cyclization activity that produces IGP and AICAR from PRFAR using the ammonia provided by the HisH subunit. This Methanococcus maripaludis (strain DSM 14266 / JCM 13030 / NBRC 101832 / S2 / LL) protein is Imidazole glycerol phosphate synthase subunit HisF.